A 274-amino-acid chain; its full sequence is 4-hydroxy-3-methylbut-2-enyl diphosphate reductase (274 aa).

[4Fe-4S] cluster is bound at residue cysteine 12. The (2E)-4-hydroxy-3-methylbut-2-enyl diphosphate site is built by histidine 36 and histidine 70. Residues histidine 36 and histidine 70 each contribute to the dimethylallyl diphosphate site. 2 residues coordinate isopentenyl diphosphate: histidine 36 and histidine 70. Cysteine 92 is a [4Fe-4S] cluster binding site. Histidine 120 serves as a coordination point for (2E)-4-hydroxy-3-methylbut-2-enyl diphosphate. Histidine 120 lines the dimethylallyl diphosphate pocket. Residue histidine 120 participates in isopentenyl diphosphate binding. Glutamate 122 serves as the catalytic Proton donor. Residue threonine 158 coordinates (2E)-4-hydroxy-3-methylbut-2-enyl diphosphate. Cysteine 186 serves as a coordination point for [4Fe-4S] cluster. The (2E)-4-hydroxy-3-methylbut-2-enyl diphosphate site is built by serine 214, serine 215, asparagine 216, and serine 258. Serine 214, serine 215, asparagine 216, and serine 258 together coordinate dimethylallyl diphosphate. Serine 214, serine 215, asparagine 216, and serine 258 together coordinate isopentenyl diphosphate.

It belongs to the IspH family. The cofactor is [4Fe-4S] cluster.

The enzyme catalyses isopentenyl diphosphate + 2 oxidized [2Fe-2S]-[ferredoxin] + H2O = (2E)-4-hydroxy-3-methylbut-2-enyl diphosphate + 2 reduced [2Fe-2S]-[ferredoxin] + 2 H(+). The catalysed reaction is dimethylallyl diphosphate + 2 oxidized [2Fe-2S]-[ferredoxin] + H2O = (2E)-4-hydroxy-3-methylbut-2-enyl diphosphate + 2 reduced [2Fe-2S]-[ferredoxin] + 2 H(+). It functions in the pathway isoprenoid biosynthesis; dimethylallyl diphosphate biosynthesis; dimethylallyl diphosphate from (2E)-4-hydroxy-3-methylbutenyl diphosphate: step 1/1. Its pathway is isoprenoid biosynthesis; isopentenyl diphosphate biosynthesis via DXP pathway; isopentenyl diphosphate from 1-deoxy-D-xylulose 5-phosphate: step 6/6. Its function is as follows. Catalyzes the conversion of 1-hydroxy-2-methyl-2-(E)-butenyl 4-diphosphate (HMBPP) into a mixture of isopentenyl diphosphate (IPP) and dimethylallyl diphosphate (DMAPP). Acts in the terminal step of the DOXP/MEP pathway for isoprenoid precursor biosynthesis. The sequence is that of 4-hydroxy-3-methylbut-2-enyl diphosphate reductase from Campylobacter concisus (strain 13826).